The primary structure comprises 252 residues: Adenylate kinase (252 aa).

47–52 (GSGKGT) is a binding site for ATP. The segment at 67–96 (ATGDMLRSQVKQGTPLGLEAKKIMDQGGLV) is NMP. AMP-binding positions include Thr68, Arg73, 94–96 (GLV), 123–126 (GFPR), and Gln130. The segment at 164 to 201 (GRLVHPASGRSYHKIFSPPKKEMTDDITGEPLVQRSDD) is LID. ATP is bound by residues Arg165 and 174 to 175 (SY). AMP-binding residues include Arg198 and Arg209. ATP is bound at residue Gln237.

The protein belongs to the adenylate kinase family. AK2 subfamily. As to quaternary structure, monomer.

Its subcellular location is the cytoplasm. It is found in the cytosol. The protein resides in the mitochondrion intermembrane space. It carries out the reaction AMP + ATP = 2 ADP. Functionally, catalyzes the reversible transfer of the terminal phosphate group between ATP and AMP. Plays an important role in cellular energy homeostasis and in adenine nucleotide metabolism. Adenylate kinase activity is critical for regulation of the phosphate utilization and the AMP de novo biosynthesis pathways. This is Adenylate kinase from Lodderomyces elongisporus (strain ATCC 11503 / CBS 2605 / JCM 1781 / NBRC 1676 / NRRL YB-4239) (Yeast).